The chain runs to 216 residues: Uracil-DNA glycosylase (216 aa).

D59 serves as the catalytic Proton acceptor.

It belongs to the uracil-DNA glycosylase (UDG) superfamily. UNG family.

The protein localises to the cytoplasm. It carries out the reaction Hydrolyzes single-stranded DNA or mismatched double-stranded DNA and polynucleotides, releasing free uracil.. Its function is as follows. Excises uracil residues from the DNA which can arise as a result of misincorporation of dUMP residues by DNA polymerase or due to deamination of cytosine. This chain is Uracil-DNA glycosylase, found in Staphylococcus epidermidis (strain ATCC 12228 / FDA PCI 1200).